Consider the following 389-residue polypeptide: Chalcone synthase 1 (389 aa).

Cys163 is an active-site residue.

It belongs to the thiolase-like superfamily. Chalcone/stilbene synthases family.

The catalysed reaction is (E)-4-coumaroyl-CoA + 3 malonyl-CoA + 3 H(+) = 2',4,4',6'-tetrahydroxychalcone + 3 CO2 + 4 CoA. It functions in the pathway secondary metabolite biosynthesis; flavonoid biosynthesis. Functionally, the primary product of this enzyme is 4,2',4',6'-tetrahydroxychalcone (also termed naringenin-chalcone or chalcone) which can under specific conditions spontaneously isomerize into naringenin. The chain is Chalcone synthase 1 (CHS1) from Citrus sinensis (Sweet orange).